The following is a 171-amino-acid chain: Large ribosomal subunit protein bL9 (171 aa).

This sequence belongs to the bacterial ribosomal protein bL9 family.

In terms of biological role, binds to the 23S rRNA. The protein is Large ribosomal subunit protein bL9 of Rickettsia rickettsii (strain Iowa).